Reading from the N-terminus, the 356-residue chain is Uroporphyrinogen decarboxylase (356 aa).

Residues 25-29 (RQAGR), Asp-75, Tyr-152, Thr-207, and His-326 each bind substrate.

It belongs to the uroporphyrinogen decarboxylase family. As to quaternary structure, homodimer.

It is found in the cytoplasm. The catalysed reaction is uroporphyrinogen III + 4 H(+) = coproporphyrinogen III + 4 CO2. It participates in porphyrin-containing compound metabolism; protoporphyrin-IX biosynthesis; coproporphyrinogen-III from 5-aminolevulinate: step 4/4. Catalyzes the decarboxylation of four acetate groups of uroporphyrinogen-III to yield coproporphyrinogen-III. This is Uroporphyrinogen decarboxylase from Magnetococcus marinus (strain ATCC BAA-1437 / JCM 17883 / MC-1).